The following is a 177-amino-acid chain: Large ribosomal subunit protein uL6 (177 aa).

This sequence belongs to the universal ribosomal protein uL6 family. Part of the 50S ribosomal subunit.

In terms of biological role, this protein binds to the 23S rRNA, and is important in its secondary structure. It is located near the subunit interface in the base of the L7/L12 stalk, and near the tRNA binding site of the peptidyltransferase center. In Aeromonas hydrophila subsp. hydrophila (strain ATCC 7966 / DSM 30187 / BCRC 13018 / CCUG 14551 / JCM 1027 / KCTC 2358 / NCIMB 9240 / NCTC 8049), this protein is Large ribosomal subunit protein uL6.